The following is a 51-amino-acid chain: Large ribosomal subunit protein eL39 (51 aa).

Belongs to the eukaryotic ribosomal protein eL39 family.

This chain is Large ribosomal subunit protein eL39 (rpl39e), found in Pyrococcus horikoshii (strain ATCC 700860 / DSM 12428 / JCM 9974 / NBRC 100139 / OT-3).